Reading from the N-terminus, the 550-residue chain is Sterol O-acyltransferase 1 (550 aa).

M1 is subject to N-acetylmethionine. A disordered region spans residues 1–36 (MVGEEKMSLRNRLSKSRENPEEDEDQRKPAKESLEA). Residues 1 to 138 (MVGEEKMSLR…LDELLEVDHI (138 aa)) lie on the Cytoplasmic side of the membrane. Residue S8 is modified to Phosphoserine. A compositionally biased stretch (basic and acidic residues) spans 15–34 (KSRENPEEDEDQRKPAKESL). H137 is a binding site for cholesterol. The helical transmembrane segment at 139 to 160 (RTIYHMFIALLILFILSTLVVD) threads the bilayer. The Lumenal segment spans residues 161–180 (YIDEGRLVLEFSLLSYAFGK). The chain crosses the membrane as a helical span at residues 181 to 206 (FPTVVWTWWIMFLSTFSVPYFLFQRW). Topologically, residues 207 to 218 (ATGYSKSSHPLI) are cytoplasmic. The chain crosses the membrane as a helical span at residues 219–244 (NSLFHGFLFMVFQIGILGFGPTYVVL). Topologically, residues 245–252 (AYTLPPAS) are lumenal. Residues 253-276 (RFIIIFEQIRFVMKAHSFVRENVP) form a helical membrane-spanning segment. Residues 277–319 (RVLNSAKEKSSTVPIPTVNQYLYFLFAPTLIYRDSYPRNPTVR) are Cytoplasmic-facing. Residues 320-352 (WGYVAMQFAQVFGCFFYVYYIFERLCAPLFRNI) traverse the membrane as a helical segment. The Lumenal segment spans residues 353-369 (KQEPFSARVLVLCVFNS). Residues 370-395 (ILPGVLILFLTFFAFLHCWLNAFAEM) form a helical membrane-spanning segment. Residues 396–443 (LRFGDRMFYKDWWNSTSYSNYYRTWNVVVHDWLYYYAYKDFLWFFSKR) are Cytoplasmic-facing. The FYXDWWN motif motif lies at 403–409 (FYKDWWN). The an acyl-CoA site is built by N415, R418, N421, H425, Y433, K445, and S456. The chain crosses the membrane as a helical span at residues 444-468 (FKSAAMLAVFAVSAVVHEYALAVCL). Residue H460 is part of the active site. The Lumenal portion of the chain corresponds to 469 to 474 (SFFYPV). The helical transmembrane segment at 475–490 (LFVLFMFFGMAFNFIV) threads the bilayer. Over 491–496 (NDSRKK) the chain is Cytoplasmic. A helical membrane pass occupies residues 497 to 528 (PIWNVMMWTSLFLGNGVLLCFYSQEWYARQHC). A disulfide bridge connects residues C528 and C546. Over 529–550 (PLKNPTFLDYVRPRSWTCRYVF) the chain is Lumenal.

The protein belongs to the membrane-bound acyltransferase family. Sterol o-acyltransferase subfamily. May form homo- or heterodimers. Interacts with UBIAD1. As to expression, expressed in most tissues, but most strongly in the adrenal gland. Expressed more strongly in liver Kupffer cells than in hepatocytes.

It is found in the endoplasmic reticulum membrane. It carries out the reaction a sterol + a long-chain fatty acyl-CoA = a long-chain 3-hydroxysterol ester + CoA. It catalyses the reaction cholesterol + an acyl-CoA = a cholesterol ester + CoA. The catalysed reaction is cholesterol + (9Z)-octadecenoyl-CoA = cholesteryl (9Z-octadecenoate) + CoA. The enzyme catalyses cholesterol + hexadecanoyl-CoA = cholesteryl hexadecanoate + CoA. It carries out the reaction octadecanoyl-CoA + cholesterol = cholesteryl octadecanoate + CoA. It catalyses the reaction (9Z,12Z)-octadecadienoyl-CoA + cholesterol = cholesteryl (9Z,12Z)-octadecadienoate + CoA. The catalysed reaction is (5Z,8Z,11Z,14Z)-eicosatetraenoyl-CoA + cholesterol = cholesteryl (5Z,8Z,11Z,14Z)-eicosatetraenoate + CoA. The enzyme catalyses (9Z)-hexadecenoyl-CoA + cholesterol = cholesteryl (9Z)-hexadecenoate + CoA. It carries out the reaction (11Z)-octadecenoyl-CoA + cholesterol = cholesteryl (11Z)-octadecenoate + CoA. It catalyses the reaction (7Z)-octadecenoyl-CoA + cholesterol = cholesteryl (7Z)-octadecenoate + CoA. Its function is as follows. Catalyzes the formation of fatty acid-cholesterol esters, which are less soluble in membranes than cholesterol. Plays a role in lipoprotein assembly and dietary cholesterol absorption. Preferentially utilizes oleoyl-CoA ((9Z)-octadecenoyl-CoA) as a substrate: shows a higher activity towards an acyl-CoA substrate with a double bond at the delta-9 position (9Z) than towards saturated acyl-CoA or an unsaturated acyl-CoA with a double bond at the delta-7 (7Z) or delta-11 (11Z) positions. This chain is Sterol O-acyltransferase 1 (SOAT1), found in Chlorocebus aethiops (Green monkey).